Here is a 332-residue protein sequence, read N- to C-terminus: Phenylalanine--tRNA ligase alpha subunit (332 aa).

Glutamate 254 is a Mg(2+) binding site.

The protein belongs to the class-II aminoacyl-tRNA synthetase family. Phe-tRNA synthetase alpha subunit type 1 subfamily. In terms of assembly, tetramer of two alpha and two beta subunits. It depends on Mg(2+) as a cofactor.

The protein localises to the cytoplasm. The enzyme catalyses tRNA(Phe) + L-phenylalanine + ATP = L-phenylalanyl-tRNA(Phe) + AMP + diphosphate + H(+). The polypeptide is Phenylalanine--tRNA ligase alpha subunit (Hydrogenovibrio crunogenus (strain DSM 25203 / XCL-2) (Thiomicrospira crunogena)).